Reading from the N-terminus, the 162-residue chain is Single-stranded DNA-binding protein 1 (162 aa).

One can recognise an SSB domain in the interval 5 to 110 (LNKVMLIGHL…IVCTDMQMLG (106 aa)). The tract at residues 110–162 (GAKDSGGGTSDASYSQNRPSYSRPSRPEPSSGNYGASPSSGGAQEFEKDDLPF) is disordered. Residues 122 to 140 (SYSQNRPSYSRPSRPEPSS) are compositionally biased toward low complexity. The span at 141-151 (GNYGASPSSGG) shows a compositional bias: polar residues.

Homotetramer.

This chain is Single-stranded DNA-binding protein 1 (ssb1), found in Chlorobaculum tepidum (strain ATCC 49652 / DSM 12025 / NBRC 103806 / TLS) (Chlorobium tepidum).